A 670-amino-acid polypeptide reads, in one-letter code: tRNA 5-methylaminomethyl-2-thiouridine biosynthesis bifunctional protein MnmC (670 aa).

The segment at methionine 1–isoleucine 242 is tRNA (mnm(5)s(2)U34)-methyltransferase. The FAD-dependent cmnm(5)s(2)U34 oxidoreductase stretch occupies residues isoleucine 269–glutamate 670.

The protein in the N-terminal section; belongs to the methyltransferase superfamily. tRNA (mnm(5)s(2)U34)-methyltransferase family. This sequence in the C-terminal section; belongs to the DAO family. Requires FAD as cofactor.

The protein localises to the cytoplasm. The enzyme catalyses 5-aminomethyl-2-thiouridine(34) in tRNA + S-adenosyl-L-methionine = 5-methylaminomethyl-2-thiouridine(34) in tRNA + S-adenosyl-L-homocysteine + H(+). Functionally, catalyzes the last two steps in the biosynthesis of 5-methylaminomethyl-2-thiouridine (mnm(5)s(2)U) at the wobble position (U34) in tRNA. Catalyzes the FAD-dependent demodification of cmnm(5)s(2)U34 to nm(5)s(2)U34, followed by the transfer of a methyl group from S-adenosyl-L-methionine to nm(5)s(2)U34, to form mnm(5)s(2)U34. This Haemophilus influenzae (strain ATCC 51907 / DSM 11121 / KW20 / Rd) protein is tRNA 5-methylaminomethyl-2-thiouridine biosynthesis bifunctional protein MnmC.